The sequence spans 83 residues: Hainantoxin-III (83 aa).

The signal sequence occupies residues M1 to A21. Residues S22 to R48 constitute a propeptide that is removed on maturation. 3 cysteine pairs are disulfide-bonded: C50–C65, C57–C70, and C64–C77. L81 bears the Leucine amide mark.

The protein belongs to the neurotoxin 10 (Hwtx-1) family. 15 (Hntx-3) subfamily. In terms of assembly, monomer. As to expression, expressed by the venom gland.

The protein resides in the secreted. Selective antagonist of neuronal tetrodotoxin (TTX)-sensitive voltage-gated sodium channels (IC(50)=1270 nM on Nav1.1/SCN1A, 270 nM on Nav1.2/SCN2A, 491 nM on Nav1.3/SCN3A and 232 nM on Nav1.7/SCN9A). This toxin suppress Nav1.7 current amplitude without significantly altering the activation, inactivation, and repriming kinetics. Short extreme depolarizations partially activate the toxin-bound channel, indicating voltage-dependent inhibition of this toxin. This toxin increases the deactivation of the Nav1.7 current after extreme depolarizations. The toxin-Nav1.7 complex is gradually dissociated upon prolonged strong depolarizations in a voltage-dependent manner, and the unbound toxin rebinds to Nav1.7 after a long repolarization. Moreover, analysis of chimeric channels showed that the DIIS3-S4 linker is critical for toxin binding to Nav1.7. These data are consistent with this toxin interacting with Nav1.7 site 4 and trapping the domain II voltage sensor in the closed state. This Cyriopagopus hainanus (Chinese bird spider) protein is Hainantoxin-III.